The chain runs to 162 residues: Cyanate hydratase (162 aa).

Residues Arg102, Glu105, and Ser128 contribute to the active site.

It belongs to the cyanase family.

It catalyses the reaction cyanate + hydrogencarbonate + 3 H(+) = NH4(+) + 2 CO2. In terms of biological role, catalyzes the reaction of cyanate with bicarbonate to produce ammonia and carbon dioxide. The sequence is that of Cyanate hydratase from Mycosarcoma maydis (Corn smut fungus).